We begin with the raw amino-acid sequence, 418 residues long: MKCFLFSGGDKRGEQKTPISVSLTSIFSDREINRSGSEFNSRDVSGTSTESSMGRKNSYPPVSTRASNLREFSITDLKSATKNFSRSVMIGEGGFGCVFRGTVRNLEDSSVKIEVAVKQLGKRGLQGHKEWVTEVNFLGIVEHTNLVKLLGYCAEDDERGIQRLLVYEYMPNRSVEFHLSPRSLTVLTWDLRLRIAQDAARGLTYLHEEMEFQIIFRDFKSSNILLDEDWKAKLSDFGLARLGPSEGLTHVSTDVVGTMGYAAPEYIQTGRLTSKSDVWGYGVFLYELITGRRPVDRNRPKGEQKLLEWVRPYLSDTRKFKLILDPRLEGKYPIKSVQKLAVVANRCLVRNSKARPKMSEVLEMVNKIVEASSGNGSPQLVPLNSVKASRDARGKNNGGGGEGGWFGKLWNPKTIRAC.

The disordered stretch occupies residues 36-63 (GSEFNSRDVSGTSTESSMGRKNSYPPVS). The 286-residue stretch at 84–369 (FSRSVMIGEG…EVLEMVNKIV (286 aa)) folds into the Protein kinase domain. ATP-binding positions include 90–98 (IGEGGFGCV) and K118. D218 serves as the catalytic Proton acceptor. Residues S373, S377, and S385 each carry the phosphoserine modification.

It belongs to the protein kinase superfamily. Ser/Thr protein kinase family. Interacts with FLS2.

The protein localises to the cell membrane. It catalyses the reaction L-seryl-[protein] + ATP = O-phospho-L-seryl-[protein] + ADP + H(+). It carries out the reaction L-threonyl-[protein] + ATP = O-phospho-L-threonyl-[protein] + ADP + H(+). Involved in the activation of early immune responses. Plays a role in pattern-triggered immunity (PTI) induced by pathogen-associated molecular patterns (PAMPs) and damage-associated molecular patterns (DAMPs). Contributes to PTI in response to the bacterial pathogen Pseudomonas syringae pv maculicola strain ES4326. Contributes to PTI in response to the bacterial pathogen Pseudomonas syringae pv tomato strain DC3000. Functions redundantly with PCRK2 in basal resistance against bacterial pathogens and in regulation of plant immunity. Functions together with PCRK2 downstream of the PAMP receptor FLS2. Contributes to the induction of SARD1 and CBP60G, which are transcriptional activator of ICS1, an enzyme involved in salicylate (SA) biosynthesis upon pathogen attack. This Arabidopsis thaliana (Mouse-ear cress) protein is Serine/threonine-protein kinase PCRK1.